A 494-amino-acid chain; its full sequence is 1-aminocyclopropane-1-carboxylate synthase 2 (494 aa).

K279 carries the post-translational modification N6-(pyridoxal phosphate)lysine. The tract at residues 474 to 494 (NVLNSPHTMSPHSPLVRARTY) is disordered. The span at 475 to 484 (VLNSPHTMSP) shows a compositional bias: polar residues.

It belongs to the class-I pyridoxal-phosphate-dependent aminotransferase family. Homodimer. Requires pyridoxal 5'-phosphate as cofactor.

It carries out the reaction S-adenosyl-L-methionine = 1-aminocyclopropane-1-carboxylate + S-methyl-5'-thioadenosine + H(+). The protein operates within alkene biosynthesis; ethylene biosynthesis via S-adenosyl-L-methionine; ethylene from S-adenosyl-L-methionine: step 1/2. In terms of biological role, catalyzes the formation of 1-aminocyclopropane-1-carboxylate, a direct precursor of ethylene in higher plants. The polypeptide is 1-aminocyclopropane-1-carboxylate synthase 2 (ACS2) (Cucurbita pepo (Vegetable marrow)).